The sequence spans 1297 residues: Protein Atossa (1297 aa).

2 disordered regions span residues 1-22 and 117-149; these read MIPT…GASA and TNPY…THQR. A compositionally biased stretch (low complexity) spans 133 to 144; sequence GSGSTGSPSSSS. Positions 174 to 182 are transactivation domain 1 (TAD1); that stretch reads VSLAINDLN. Disordered regions lie at residues 206-227, 287-311, 518-655, 704-741, and 1017-1048; these read SSAG…NSSD, TPTT…KHGP, GLPH…ETQS, SNGT…SSAD, and AAHK…DLES. Low complexity-rich tracts occupy residues 213 to 226 and 287 to 305; these read NNSS…SNSS and TPTT…SSAS. Residues 564–578 are compositionally biased toward polar residues; that stretch reads SALTPTTTAGGSNCD. Basic residues predominate over residues 605–620; the sequence is QKYRKRMQRRDKKRER. Low complexity-rich tracts occupy residues 643–655 and 706–716; these read SQTQ…ETQS and GTANGSTNGAT. Residues 717–731 are compositionally biased toward acidic residues; that stretch reads DDGDDSDTTASEMEE. The tract at residues 1074 to 1132 is required for macropage invasion; sequence LLGNLEESLLQRRLMPKIEVMGFTLQLGASGGFCPTQVNIPAVSYFYELHGETLSTPYL. Residues 1150-1158 are transactivation domain 2 (TAD2); it reads VQATLLNPI. The disordered stretch occupies residues 1192-1213; the sequence is SQDQDEGHKVPRSPTVTSTTSK. A compositionally biased stretch (low complexity) spans 1203 to 1212; it reads RSPTVTSTTS.

It belongs to the ATOS family. Expressed in macrophages.

The protein localises to the nucleus. Functionally, transcription regulator that synchronizes transcriptional and translational programs to promote macrophage invasion of tissues. Required in macrophages for their early invasion into the extended germband. Induces transcriptional expression of metabolic enzymes as well as of the translational regulator pths/DDX47. With pths/DDX47, adjusts transcription and translation of a subset of OXPHOS genes to increase mitochondrial bioenergetics and allow macrophage tissue invasion. The sequence is that of Protein Atossa from Drosophila melanogaster (Fruit fly).